We begin with the raw amino-acid sequence, 344 residues long: Ribosomal RNA large subunit methyltransferase Cfr (344 aa).

E90 functions as the Proton acceptor in the catalytic mechanism. A Radical SAM core domain is found at 97–330 (KQGWESFCIS…ATVRTQFGSE (234 aa)). A disulfide bridge connects residues C104 and C335. The [4Fe-4S] cluster site is built by C111, C115, and C118. S-adenosyl-L-methionine is bound by residues 157-158 (GE), S188, 211-213 (SLH), and N292. C335 serves as the catalytic S-methylcysteine intermediate.

Belongs to the radical SAM superfamily. RlmN family. Cfr subfamily. [4Fe-4S] cluster is required as a cofactor.

It is found in the cytoplasm. The catalysed reaction is adenosine(2503) in 23S rRNA + 2 reduced [2Fe-2S]-[ferredoxin] + 2 S-adenosyl-L-methionine = 8-methyladenosine(2503) in 23S rRNA + 5'-deoxyadenosine + L-methionine + 2 oxidized [2Fe-2S]-[ferredoxin] + S-adenosyl-L-homocysteine. Specifically methylates position 8 of adenine 2503 in 23S rRNA. Confers resistance to some classes of antibiotics. This is Ribosomal RNA large subunit methyltransferase Cfr from Clostridium botulinum (strain Hall / ATCC 3502 / NCTC 13319 / Type A).